Consider the following 490-residue polypeptide: Cysteine desulfurase, mitochondrial (490 aa).

Residues 161–162, Asn241, Gln269, and 289–291 contribute to the pyridoxal 5'-phosphate site; these read AT and SSH. Lys292 carries the N6-(pyridoxal phosphate)lysine modification. Thr329 is a binding site for pyridoxal 5'-phosphate. The active-site Cysteine persulfide intermediate is the Cys414. Residue Cys414 participates in [2Fe-2S] cluster binding.

It belongs to the class-V pyridoxal-phosphate-dependent aminotransferase family. NifS/IscS subfamily. Pyridoxal 5'-phosphate is required as a cofactor.

It is found in the mitochondrion. The catalysed reaction is (sulfur carrier)-H + L-cysteine = (sulfur carrier)-SH + L-alanine. Catalyzes the removal of elemental sulfur from cysteine to produce alanine. It supplies the inorganic sulfur for iron-sulfur (Fe-S) clusters. Plays a role in both tRNA-processing and mitochondrial metabolism. Involved in the 2-thio-modification of both 5-carboxymethylaminomethyl-2-thiouridine in mitochondrial tRNAs and 5-methoxycarbonylmethyl-2-thiouridine (mcm5s2U) in cytoplasmic tRNAs. In Eremothecium gossypii (strain ATCC 10895 / CBS 109.51 / FGSC 9923 / NRRL Y-1056) (Yeast), this protein is Cysteine desulfurase, mitochondrial.